Consider the following 411-residue polypeptide: Argininosuccinate lyase (411 aa).

This sequence belongs to the lyase 1 family. Argininosuccinate lyase subfamily.

It is found in the cytoplasm. The catalysed reaction is 2-(N(omega)-L-arginino)succinate = fumarate + L-arginine. The protein operates within amino-acid biosynthesis; L-arginine biosynthesis; L-arginine from L-ornithine and carbamoyl phosphate: step 3/3. This is Argininosuccinate lyase from Legionella pneumophila subsp. pneumophila (strain Philadelphia 1 / ATCC 33152 / DSM 7513).